Reading from the N-terminus, the 1032-residue chain is Protein translocase subunit SecA (1032 aa).

ATP-binding positions include Gln121, 139-143 (GEGKT), and Asp570. A disordered region spans residues 945–975 (TAGGSENATEDAPKPAKRGVGGAARRVSNAA). Zn(2+)-binding residues include Cys994, Cys996, Cys1005, and His1006.

It belongs to the SecA family. Monomer and homodimer. Part of the essential Sec protein translocation apparatus which comprises SecA, SecYEG and auxiliary proteins SecDF. Other proteins may also be involved. Zn(2+) is required as a cofactor.

The protein localises to the cell membrane. It is found in the cytoplasm. The catalysed reaction is ATP + H2O + cellular proteinSide 1 = ADP + phosphate + cellular proteinSide 2.. Functionally, part of the Sec protein translocase complex. Interacts with the SecYEG preprotein conducting channel. Has a central role in coupling the hydrolysis of ATP to the transfer of proteins into and across the cell membrane, serving as an ATP-driven molecular motor driving the stepwise translocation of polypeptide chains across the membrane. This chain is Protein translocase subunit SecA, found in Herpetosiphon aurantiacus (strain ATCC 23779 / DSM 785 / 114-95).